The primary structure comprises 526 residues: Probable carboxypeptidase 2 (526 aa).

An N-terminal signal peptide occupies residues 1–21 (MVAYRLLALISLGLGSHCASA). A glycan (N-linked (GlcNAc...) asparagine) is linked at Asn-46. Residues 53–76 (PAFTSPGTVPRGFSDGTSGPTRDE) are disordered. In terms of domain architecture, Peptidase M14 spans 71 to 351 (GPTRDETMEG…VMAKSILQTA (281 aa)). Asn-116 carries N-linked (GlcNAc...) asparagine glycosylation. Residues His-136, Glu-139, and His-224 each contribute to the Zn(2+) site. Glu-322 functions as the Proton donor/acceptor in the catalytic mechanism. Asn-393 and Asn-459 each carry an N-linked (GlcNAc...) asparagine glycan.

It belongs to the peptidase M14 family. The cofactor is Zn(2+).

Its subcellular location is the secreted. In terms of biological role, extracellular metalloprotease that contributes to pathogenicity. This is Probable carboxypeptidase 2 (MCPB) from Arthroderma benhamiae (strain ATCC MYA-4681 / CBS 112371) (Trichophyton mentagrophytes).